Reading from the N-terminus, the 82-residue chain is Small ribosomal subunit protein bS16 (82 aa).

Belongs to the bacterial ribosomal protein bS16 family.

The sequence is that of Small ribosomal subunit protein bS16 from Actinobacillus succinogenes (strain ATCC 55618 / DSM 22257 / CCUG 43843 / 130Z).